The primary structure comprises 188 residues: Inosine triphosphate pyrophosphatase (188 aa).

9 to 14 (TGNAKK) provides a ligand contact to ITP. Glu-39 is a Mg(2+) binding site. ITP contacts are provided by residues Lys-51, 67-68 (DT), Lys-84, 143-146 (FGWD), Lys-166, and 171-172 (HR).

The protein belongs to the HAM1 NTPase family. As to quaternary structure, homodimer. Mg(2+) is required as a cofactor. It depends on Mn(2+) as a cofactor.

It localises to the cytoplasm. The catalysed reaction is ITP + H2O = IMP + diphosphate + H(+). It catalyses the reaction dITP + H2O = dIMP + diphosphate + H(+). It carries out the reaction XTP + H2O = XMP + diphosphate + H(+). Functionally, pyrophosphatase that hydrolyzes non-canonical purine nucleotides such as inosine triphosphate (ITP), deoxyinosine triphosphate (dITP) or xanthosine 5'-triphosphate (XTP) to their respective monophosphate derivatives. The enzyme does not distinguish between the deoxy- and ribose forms. Probably excludes non-canonical purines from RNA and DNA precursor pools, thus preventing their incorporation into RNA and DNA and avoiding chromosomal lesions. This Anopheles gambiae (African malaria mosquito) protein is Inosine triphosphate pyrophosphatase.